The following is a 192-amino-acid chain: Lipid A acyltransferase PagP (192 aa).

An N-terminal signal peptide occupies residues 1 to 24 (MWLRFCAPALMAWYWVFFPSTSQA). Residues His63, Asp106, and Ser107 contribute to the active site.

The protein belongs to the lipid A palmitoyltransferase family. In terms of assembly, homodimer.

Its subcellular location is the cell outer membrane. The catalysed reaction is a lipid A + a 1,2-diacyl-sn-glycero-3-phosphocholine = a hepta-acyl lipid A + a 2-acyl-sn-glycero-3-phosphocholine. It catalyses the reaction a lipid IVA + a 1,2-diacyl-sn-glycero-3-phosphocholine = a lipid IVB + a 2-acyl-sn-glycero-3-phosphocholine. The enzyme catalyses a lipid IIA + a 1,2-diacyl-sn-glycero-3-phosphocholine = a lipid IIB + a 2-acyl-sn-glycero-3-phosphocholine. Functionally, transfers a fatty acid residue from the sn-1 position of a phospholipid to the N-linked hydroxyfatty acid chain on the proximal unit of lipid A or its precursors. The sequence is that of Lipid A acyltransferase PagP from Musicola paradisiaca (strain Ech703) (Dickeya paradisiaca).